The chain runs to 176 residues: ATP-dependent protease subunit HslV (176 aa).

Threonine 2 is an active-site residue. Positions 157, 160, and 163 each coordinate Na(+).

The protein belongs to the peptidase T1B family. HslV subfamily. As to quaternary structure, a double ring-shaped homohexamer of HslV is capped on each side by a ring-shaped HslU homohexamer. The assembly of the HslU/HslV complex is dependent on binding of ATP.

It is found in the cytoplasm. The catalysed reaction is ATP-dependent cleavage of peptide bonds with broad specificity.. With respect to regulation, allosterically activated by HslU binding. Protease subunit of a proteasome-like degradation complex believed to be a general protein degrading machinery. This is ATP-dependent protease subunit HslV from Pectobacterium atrosepticum (strain SCRI 1043 / ATCC BAA-672) (Erwinia carotovora subsp. atroseptica).